The sequence spans 87 residues: Small ribosomal subunit protein uS17 (87 aa).

The protein belongs to the universal ribosomal protein uS17 family. As to quaternary structure, part of the 30S ribosomal subunit.

One of the primary rRNA binding proteins, it binds specifically to the 5'-end of 16S ribosomal RNA. The polypeptide is Small ribosomal subunit protein uS17 (Bacillus cytotoxicus (strain DSM 22905 / CIP 110041 / 391-98 / NVH 391-98)).